The following is a 214-amino-acid chain: Transcription factor MYB24 (214 aa).

2 consecutive HTH myb-type domains span residues 14–66 (DAEV…LNYL) and 67–121 (RPDV…QKYI). 2 DNA-binding regions (H-T-H motif) span residues 42-66 (WNSL…LNYL) and 94-117 (WSKI…RTKI).

As to quaternary structure, interacts (via N-terminus) with TIFY10A/JAZ1, TIFY5A/JAZ8 AND TIFY3A/JAZ11. In terms of tissue distribution, expressed specifically in flowers. Expressed in all four whorls of the flower and in the vascular tissue of stamen filament and sepals. Detected in male and female gametophytes, especially in microspores and ovules. Weakly expressed in petals and the upper part of pistils.

It localises to the nucleus. In terms of biological role, transcription factor acting redundantly with MYB21 and MYB57 to control stamen filament elongation in the late developed flowers. Contributes with MYB21 to induction of MYB108 by jasmonate. Repressed at the transcript levels by DELLA proteins. In Arabidopsis thaliana (Mouse-ear cress), this protein is Transcription factor MYB24 (MYB24).